A 736-amino-acid chain; its full sequence is Fidgetin (736 aa).

Disordered stretches follow at residues glycine 118 to histidine 155, threonine 180 to glycine 248, isoleucine 272 to alanine 295, and serine 341 to glutamine 438. Positions valine 128–serine 150 are enriched in low complexity. Residues glutamine 205 to leucine 214 show a composition bias toward pro residues. Positions proline 216–proline 232 are enriched in low complexity. The segment covering aspartate 352–aspartate 368 has biased composition (polar residues). ATP is bound by residues alanine 467 and glycine 507–leucine 512.

The protein belongs to the AAA ATPase family.

The protein resides in the nucleus matrix. Its subcellular location is the cytoplasm. The protein localises to the cytoskeleton. It is found in the microtubule organizing center. It localises to the centrosome. ATP-dependent microtubule severing protein. Severs microtubules along their length and depolymerizes their ends, primarily the minus-end, suppressing microtubule growth from and attachment to centrosomes. Microtubule severing may promote rapid reorganization of cellular microtubule arrays and the release of microtubules from the centrosome following nucleation. Microtubule release from the mitotic spindle poles may allow depolymerization of the microtubule end proximal to the spindle pole, leading to poleward microtubule flux and poleward motion of chromosome. The protein is Fidgetin (fign) of Danio rerio (Zebrafish).